Here is a 283-residue protein sequence, read N- to C-terminus: Pantothenate synthetase (283 aa).

Residue 26-33 (MGNLHAGH) coordinates ATP. His33 acts as the Proton donor in catalysis. Residue Gln57 participates in (R)-pantoate binding. Gln57 provides a ligand contact to beta-alanine. 144–147 (GRKD) serves as a coordination point for ATP. Gln150 contacts (R)-pantoate. Residues Leu173 and 181–184 (MSSR) contribute to the ATP site.

It belongs to the pantothenate synthetase family. In terms of assembly, homodimer.

The protein resides in the cytoplasm. It carries out the reaction (R)-pantoate + beta-alanine + ATP = (R)-pantothenate + AMP + diphosphate + H(+). It functions in the pathway cofactor biosynthesis; (R)-pantothenate biosynthesis; (R)-pantothenate from (R)-pantoate and beta-alanine: step 1/1. Its function is as follows. Catalyzes the condensation of pantoate with beta-alanine in an ATP-dependent reaction via a pantoyl-adenylate intermediate. This is Pantothenate synthetase from Thiobacillus denitrificans (strain ATCC 25259 / T1).